The sequence spans 318 residues: Ribosomal RNA small subunit methyltransferase H (318 aa).

S-adenosyl-L-methionine is bound by residues 35–37 (AGH), Asp55, Phe84, Asp105, and Gln112. Residues 294–318 (SDSELSENNRSRSAKLRIAEKIKSR) form a disordered region.

The protein belongs to the methyltransferase superfamily. RsmH family.

Its subcellular location is the cytoplasm. The enzyme catalyses cytidine(1402) in 16S rRNA + S-adenosyl-L-methionine = N(4)-methylcytidine(1402) in 16S rRNA + S-adenosyl-L-homocysteine + H(+). Functionally, specifically methylates the N4 position of cytidine in position 1402 (C1402) of 16S rRNA. The chain is Ribosomal RNA small subunit methyltransferase H from Enterococcus faecalis (strain ATCC 700802 / V583).